Reading from the N-terminus, the 446-residue chain is MPHDPSFTPTQLAARAAYLLRGNDLGTMTTAAPLLYPHMWSWDAAFVAIGLAPLSVERAVVELDTLLSAQWRNGMIPHIVFANGVDGYFPGPARWATATLADNAPRNRLTSGITQPPVHAIAVQRILEHARTRGRSTRAVAEAFLDRRWGDLMRWHRWLAECRDRNERGRITLYHGWESGMDNSPRWDSAYANVVPGKLPEYQRADNVIITDPSQRPSDGEYDRYLWLLEEMKAVRYDDERLPSVMSFQVEDVFFSAIFSVACQVLAEIGEDYKRPHADVKDLYLWAERFRAGVVETTDQRTGAARDFDVLAEKWLVTETAAQFAPLLCGGLPHDRERALLKLLEGPRFCGHPDLKYGLIPSTSPVSRDFRPREYWRGPVWPVLTWLFSWCFARRGWAERARLLRQEGLRQASDGSFAEYYEPFTGEPLGSMQQSWTAAAVLDWLG.

Residues Tyr36, 40-43 (WSWD), Tyr88, Gln115, and Gly180 each bind substrate. Asp182 acts as the Proton donor in catalysis. Substrate contacts are provided by residues Arg216 and 375-376 (YW). Residue Glu419 is the Proton acceptor of the active site. Gln434 contacts substrate.

Belongs to the glycosyl hydrolase 63 family. As to quaternary structure, homotetramer. Dimer of dimers.

The enzyme catalyses (2R)-2-O-(alpha-D-glucopyranosyl)-glycerate + H2O = (R)-glycerate + D-glucose. Its activity is regulated as follows. Activity is not dependent on divalent cations, but it is enhanced by Mg(2+). Its function is as follows. Catalyzes the hydrolysis of glucosylglycerate (GG) to glycerate and glucose. Involved in recovery from nitrogen starvation by promoting the rapid mobilization of the glucosylglycerate that accumulates under these conditions. Can also hydrolyze mannosylglycerate (MG), with tenfold lower efficiency. The sequence is that of Glucosylglycerate hydrolase from Mycolicibacterium hassiacum (strain DSM 44199 / CIP 105218 / JCM 12690 / 3849) (Mycobacterium hassiacum).